Consider the following 290-residue polypeptide: 4-hydroxy-tetrahydrodipicolinate synthase (290 aa).

Thr-44 provides a ligand contact to pyruvate. The active-site Proton donor/acceptor is the Tyr-132. The active-site Schiff-base intermediate with substrate is Lys-160. A pyruvate-binding site is contributed by Ile-202.

Belongs to the DapA family. In terms of assembly, homotetramer; dimer of dimers.

The protein resides in the cytoplasm. It catalyses the reaction L-aspartate 4-semialdehyde + pyruvate = (2S,4S)-4-hydroxy-2,3,4,5-tetrahydrodipicolinate + H2O + H(+). It participates in amino-acid biosynthesis; L-lysine biosynthesis via DAP pathway; (S)-tetrahydrodipicolinate from L-aspartate: step 3/4. Functionally, catalyzes the condensation of (S)-aspartate-beta-semialdehyde [(S)-ASA] and pyruvate to 4-hydroxy-tetrahydrodipicolinate (HTPA). This is 4-hydroxy-tetrahydrodipicolinate synthase from Legionella pneumophila subsp. pneumophila (strain Philadelphia 1 / ATCC 33152 / DSM 7513).